The following is a 1005-amino-acid chain: Small G protein signaling modulator 2 (1005 aa).

The RUN domain occupies 34-191 (HEDSSHIIAL…EYTKLKTADH (158 aa)). 2 disordered regions span residues 95–121 (QAEG…KAPA) and 205–236 (HRIR…SASE). Phosphoserine occurs at positions 402 and 444. A Rab-GAP TBC domain is found at 566–938 (GVEHEIRKDV…AVWEVIWAAR (373 aa)). 2 disordered regions span residues 657 to 687 (FISV…AGTP) and 729 to 761 (GFED…QETL). A compositionally biased stretch (basic and acidic residues) spans 672–681 (EDSKPKREQE). Over residues 730–740 (FEDDGAGEDGS) the composition is skewed to acidic residues.

This sequence belongs to the RUTBC family. Interacts with RAB4A, RAB11A, RAP1A, RAP1B, RAP2A and RAP2B. No interaction with RAB27A. Interacts with RAB9A. Widely expressed.

Its subcellular location is the cytoplasm. It localises to the melanosome. Possesses GTPase activator activity towards RAB32, RAB33B and RAB38. Regulates the trafficking of melanogenic enzymes TYR, TYRP1 and DCT/TYRP2 to melanosomes in melanocytes by inactivating RAB32 and RAB38. Inhibits RAB32 and RAB38 activation both directly by promoting their GTPase activity and indirectly by disrupting the RAB9A-HPS4 interaction which is required for RAB32/38 activation. This is Small G protein signaling modulator 2 (Sgsm2) from Mus musculus (Mouse).